The primary structure comprises 1164 residues: Shugoshin 2A (1164 aa).

Positions 62 to 113 (LSKEKENSRRITTEKMQLQKEVEKLNFENTFLRLKLNTLNKKLVEIESHVSN) form a coiled coil. Disordered stretches follow at residues 160 to 269 (SEND…VTMR), 287 to 314 (HQPT…NTQR), 390 to 492 (RKVK…PFSR), 521 to 541 (TFVI…DKDT), and 917 to 992 (PLDS…ETHG). Residues 182–198 (SKTSPDSTSSVSRQPSS) show a composition bias toward low complexity. Composition is skewed to polar residues over residues 238–247 (DQSPKSSLSE) and 288–299 (QPTSSPGSNWNN). Residues 390–412 (RKVKGASSDKKRESSKRECKDGS) show a composition bias toward basic and acidic residues. Residues 443 to 472 (CISSTEQPSQVNTQKKRTLQNSSDQENIQN) are compositionally biased toward polar residues. A compositionally biased stretch (basic and acidic residues) spans 525–541 (RKSEKDNLFPNQEDKDT). Positions 934–948 (GEQTNLPKMQKQSAG) are enriched in polar residues. At S1042 the chain carries Phosphoserine. The disordered stretch occupies residues 1092 to 1164 (ITTGTRNPHH…EPSLRSKMRR (73 aa)). Over residues 1112–1125 (TSLVLVDTSSVSDT) the composition is skewed to low complexity. A compositionally biased stretch (polar residues) spans 1126–1140 (NPANPENESEGQSSH).

This sequence belongs to the shugoshin family. In terms of assembly, part of an astrin (SPAG5)-kinastrin (SKAP) complex containing KNSTRN, SPAG5, PLK1, DYNLL1 and SGO2A. Interacts with CDCA8. Interacts with PPP2CA. As to expression, ubiquitously expressed in proliferating cells. Highly expressed in the testis and oocytes.

It is found in the nucleus. The protein localises to the chromosome. Its subcellular location is the centromere. It localises to the kinetochore. Functionally, cooperates with PPP2CA to protect centromeric cohesin from separase-mediated cleavage in oocytes specifically during meiosis I. Has a crucial role in protecting REC8 at centromeres from cleavage by separase. During meiosis, protects centromeric cohesion complexes until metaphase II/anaphase II transition, preventing premature release of meiosis-specific REC8 cohesin complexes from anaphase I centromeres. Is thus essential for an accurate gametogenesis. May act by targeting PPP2CA to centromeres, thus leading to cohesin dephosphorylation. Essential for recruiting KIF2C to the inner centromere and for correcting defective kinetochore attachments. Involved in centromeric enrichment of AUKRB in prometaphase. The polypeptide is Shugoshin 2A (Mus musculus (Mouse)).